Reading from the N-terminus, the 60-residue chain is MAVPRRKTSPSRRGMRRSADAIKKPTYAEDKDSGELRRPHHLDLKTGMYKGRQVLIKKES.

Residues 1–16 (MAVPRRKTSPSRRGMR) show a composition bias toward basic residues. Residues 1–60 (MAVPRRKTSPSRRGMRRSADAIKKPTYAEDKDSGELRRPHHLDLKTGMYKGRQVLIKKES) are disordered. Basic and acidic residues predominate over residues 17–44 (RSADAIKKPTYAEDKDSGELRRPHHLDL).

The protein belongs to the bacterial ribosomal protein bL32 family.

The polypeptide is Large ribosomal subunit protein bL32 (Rhodopseudomonas palustris (strain BisA53)).